The following is a 513-amino-acid chain: MRTDVFLQRRKRRDVLLSIIALLLLIFAIVHLVFCAGLSFQGSSSARVRRDLENASECVQPQSSEFPEGFFTVQERKDGGILIYFMIIFYMLLSVSIVCDEYFLPSLEVISERLGLSQDVAGATFMAAGSSAPELVTAFLGVFVTKGDIGVSTIMGSAVYNLLCICAACGLLSSAVGRLSCWPLFRDCVAYAISVAAVIAIISDNRVYWYDGACLLLVYGVYVAVLCFDLRISEYVMQRFSPCCWCLKPRDRDSGEQQPLVGWSDDSSLRVQRRSRNDSGIFQDDSGYSHLSLSLHGLNEISDEHKSVFSMPDHDLKRILWVLSLPVSTLLFVSVPDCRRPFWKNFYMLTFLMSAVWISAFTYVLVWMVTIVGETLGIPDTVMGMTLLAAGTSIPDTVASVMVAREGKSDMAMSNIVGSNVFDMLCLGLPWFIQTVFVDVGSPVEVNSSGLVFMSCTLLLSIIFLFLAVHINGWKLDWKLGLVCLACYILFATLSILYELGIIGNNPIRSCSD.

An N-terminal signal peptide occupies residues 1 to 35 (MRTDVFLQRRKRRDVLLSIIALLLLIFAIVHLVFC). The Extracellular portion of the chain corresponds to 36-78 (AGLSFQGSSSARVRRDLENASECVQPQSSEFPEGFFTVQERKD). The chain crosses the membrane as a helical span at residues 79–99 (GGILIYFMIIFYMLLSVSIVC). Topologically, residues 100-123 (DEYFLPSLEVISERLGLSQDVAGA) are cytoplasmic. A helical transmembrane segment spans residues 124-144 (TFMAAGSSAPELVTAFLGVFV). Residues 145–148 (TKGD) lie on the Extracellular side of the membrane. The helical transmembrane segment at 149–169 (IGVSTIMGSAVYNLLCICAAC) threads the bilayer. Residues 170–181 (GLLSSAVGRLSC) are Cytoplasmic-facing. A helical transmembrane segment spans residues 182–202 (WPLFRDCVAYAISVAAVIAII). The Extracellular segment spans residues 203-207 (SDNRV). The helical transmembrane segment at 208 to 228 (YWYDGACLLLVYGVYVAVLCF) threads the bilayer. Topologically, residues 229–315 (DLRISEYVMQ…KSVFSMPDHD (87 aa)) are cytoplasmic. The chain crosses the membrane as a helical span at residues 316–336 (LKRILWVLSLPVSTLLFVSVP). Residues 337–350 (DCRRPFWKNFYMLT) lie on the Extracellular side of the membrane. A helical membrane pass occupies residues 351-371 (FLMSAVWISAFTYVLVWMVTI). Residues 372–381 (VGETLGIPDT) are Cytoplasmic-facing. Residues 382-402 (VMGMTLLAAGTSIPDTVASVM) traverse the membrane as a helical segment. At 403–420 (VAREGKSDMAMSNIVGSN) the chain is on the extracellular side. The chain crosses the membrane as a helical span at residues 421–441 (VFDMLCLGLPWFIQTVFVDVG). At 442–450 (SPVEVNSSG) the chain is on the cytoplasmic side. The helical transmembrane segment at 451-471 (LVFMSCTLLLSIIFLFLAVHI) threads the bilayer. Topologically, residues 472–482 (NGWKLDWKLGL) are extracellular. A helical transmembrane segment spans residues 483 to 503 (VCLACYILFATLSILYELGII). Residues 504–513 (GNNPIRSCSD) are Cytoplasmic-facing.

Belongs to the Ca(2+):cation antiporter (CaCA) (TC 2.A.19) family. SLC24A subfamily. As to expression, highly expressed in melanin-producing cells. Colocalizes with melanin biosynthesis marker dct.

Its subcellular location is the golgi apparatus. The protein resides in the trans-Golgi network membrane. It localises to the melanosome. It carries out the reaction Ca(2+)(out) + K(+)(out) + 4 Na(+)(in) = Ca(2+)(in) + K(+)(in) + 4 Na(+)(out). Calcium, potassium:sodium antiporter that transports 1 Ca(2+) and 1 K(+) to the melanosome in exchange for 4 cytoplasmic Na(+). Involved in pigmentation, possibly by participating in ion transport in melanosomes. Predominant sodium-calcium exchanger in melanocytes. In Danio rerio (Zebrafish), this protein is Sodium/potassium/calcium exchanger 5 (slc24a5).